Reading from the N-terminus, the 390-residue chain is Leu/Ile/Val-binding protein homolog 6 (390 aa).

A signal peptide spans 1–21 (MKKIALTALAVFSLAASAAYA).

It belongs to the leucine-binding protein family.

Its function is as follows. Component of an amino-acid transport system. This Brucella melitensis biotype 1 (strain ATCC 23456 / CCUG 17765 / NCTC 10094 / 16M) protein is Leu/Ile/Val-binding protein homolog 6.